We begin with the raw amino-acid sequence, 151 residues long: Acidic phospholipase A2 3 (151 aa).

An N-terminal signal peptide occupies residues 1–27; the sequence is MYPAHLLVLLAVCVSLLGAASIPARPL. 7 cysteine pairs are disulfide-bonded: C38/C104, C54/C151, C56/C72, C71/C132, C78/C125, C88/C118, and C111/C123. The Ca(2+) site is built by Y55, G57, and G59. The active site involves H75. A Ca(2+)-binding site is contributed by D76. The active site involves D126.

Belongs to the phospholipase A2 family. Group I subfamily. D49 sub-subfamily. It depends on Ca(2+) as a cofactor. As to expression, expressed by the venom gland.

The protein localises to the secreted. The catalysed reaction is a 1,2-diacyl-sn-glycero-3-phosphocholine + H2O = a 1-acyl-sn-glycero-3-phosphocholine + a fatty acid + H(+). Functionally, PLA2 catalyzes the calcium-dependent hydrolysis of the 2-acyl groups in 3-sn-phosphoglycerides. The polypeptide is Acidic phospholipase A2 3 (Tropidechis carinatus (Australian rough-scaled snake)).